The chain runs to 160 residues: Probable dihydroneopterin aldolase 3 (160 aa).

Substrate contacts are provided by residues Glu-59, Phe-91, and 110 to 111 (YE). Lys-137 functions as the Proton donor/acceptor in the catalytic mechanism.

This sequence belongs to the DHNA family. Homooctamer. Forms a hollow cylinder assembled from two ring-shaped tetramers. Expressed at very low levels in siliques.

It carries out the reaction 7,8-dihydroneopterin = 6-hydroxymethyl-7,8-dihydropterin + glycolaldehyde. It functions in the pathway cofactor biosynthesis; tetrahydrofolate biosynthesis; 2-amino-4-hydroxy-6-hydroxymethyl-7,8-dihydropteridine diphosphate from 7,8-dihydroneopterin triphosphate: step 3/4. Functionally, catalyzes the conversion of 7,8-dihydroneopterin into 6-hydroxymethyl-7,8-dihydropterin, a biosynthetic precursor of the vitamin tetrahydrofolate. Can use L-threo-dihydroneopterin and D-erythro-dihydroneopterin as substrates for the formation of 6-hydroxymethyldihydropterin, but it can also catalyze the epimerization of carbon 2' of dihydroneopterin and dihydromonapterin. This Arabidopsis thaliana (Mouse-ear cress) protein is Probable dihydroneopterin aldolase 3.